A 345-amino-acid polypeptide reads, in one-letter code: N-acetyl-gamma-glutamyl-phosphate reductase (345 aa).

Residue C149 is part of the active site.

Belongs to the NAGSA dehydrogenase family. Type 1 subfamily.

It is found in the cytoplasm. It catalyses the reaction N-acetyl-L-glutamate 5-semialdehyde + phosphate + NADP(+) = N-acetyl-L-glutamyl 5-phosphate + NADPH + H(+). It participates in amino-acid biosynthesis; L-arginine biosynthesis; N(2)-acetyl-L-ornithine from L-glutamate: step 3/4. Its function is as follows. Catalyzes the NADPH-dependent reduction of N-acetyl-5-glutamyl phosphate to yield N-acetyl-L-glutamate 5-semialdehyde. This is N-acetyl-gamma-glutamyl-phosphate reductase from Bacillus cereus (strain 03BB102).